A 471-amino-acid polypeptide reads, in one-letter code: T-box transcription factor T (471 aa).

Residues 24-196 (LWTKFCSLTN…HNPFAKAFLD (173 aa)) constitute a DNA-binding region (T-box).

Developing notochord.

The protein resides in the nucleus. Its function is as follows. Involved in the transcriptional regulation of genes required for mesoderm differentiation. The polypeptide is T-box transcription factor T (Halocynthia roretzi (Sea squirt)).